Reading from the N-terminus, the 570-residue chain is Putative periplasmic trehalase (570 aa).

A signal peptide spans 1–34; sequence MIPPEIRRSVLLQKAIKLALAGTLLTFASFSATA. Residues Arg159, 166–167, Asn203, 212–214, 284–286, and Gly317 each bind substrate; these read WD, RSQ, and RPE. Active-site proton donor/acceptor residues include Asp319 and Glu503. Glu518 is a binding site for substrate. The interval 544 to 570 is disordered; sequence KPCDSVPSTRPASLSATPTKTPSAATQ. The segment covering 554–570 has biased composition (low complexity); the sequence is PASLSATPTKTPSAATQ.

The protein belongs to the glycosyl hydrolase 37 family. Monomer.

The protein resides in the periplasm. It carries out the reaction alpha,alpha-trehalose + H2O = alpha-D-glucose + beta-D-glucose. Provides the cells with the ability to utilize trehalose at high osmolarity by splitting it into glucose molecules that can subsequently be taken up by the phosphotransferase-mediated uptake system. The sequence is that of Putative periplasmic trehalase from Salmonella typhi.